The primary structure comprises 583 residues: Nuclear distribution protein nudE homolog 1 (583 aa).

Residues 14–195 (ATLEDTLGWY…QDKFKKQESR (182 aa)) are a coiled coil. Disordered stretches follow at residues 34 to 68 (LAEF…KAET), 211 to 339 (TFDG…TSNS), and 358 to 583 (HSVR…GETY). Positions 35–67 (AEFRDSSRELEQELEKDIERAEKQERHHQEKAE) are enriched in basic and acidic residues. Composition is skewed to polar residues over residues 219 to 235 (PGST…TDSK), 279 to 319 (RSRL…TMRT), 329 to 339 (SASNKLPTSNS), 379 to 392 (NVYS…SITI), and 399 to 422 (SGSA…STPK). Residues 453 to 469 (RPSSRASTSYATSYARP) are compositionally biased toward low complexity. Residues 529–538 (RRGTYSSQGG) are compositionally biased toward polar residues.

Belongs to the nudE family. In terms of assembly, self-associates. Interacts with PAC1.

The protein resides in the cytoplasm. It is found in the cytoskeleton. Its function is as follows. Required for nuclear migration. The protein is Nuclear distribution protein nudE homolog 1 (NDE1) of Gibberella zeae (strain ATCC MYA-4620 / CBS 123657 / FGSC 9075 / NRRL 31084 / PH-1) (Wheat head blight fungus).